The sequence spans 436 residues: Protein TolB homolog (436 aa).

The first 27 residues, 1 to 27 (MRHSIRLTAALLLAFIACFSFPLSAMA), serve as a signal peptide directing secretion.

Belongs to the TolB family.

The protein localises to the periplasm. In Chlorobium luteolum (strain DSM 273 / BCRC 81028 / 2530) (Pelodictyon luteolum), this protein is Protein TolB homolog.